The sequence spans 1399 residues: DNA-directed RNA polymerase subunit beta' (1399 aa).

Zn(2+) is bound by residues cysteine 70, cysteine 72, cysteine 85, and cysteine 88. Positions 460, 462, and 464 each coordinate Mg(2+). Zn(2+) contacts are provided by cysteine 814, cysteine 888, cysteine 895, and cysteine 898.

Belongs to the RNA polymerase beta' chain family. As to quaternary structure, the RNAP catalytic core consists of 2 alpha, 1 beta, 1 beta' and 1 omega subunit. When a sigma factor is associated with the core the holoenzyme is formed, which can initiate transcription. Mg(2+) is required as a cofactor. It depends on Zn(2+) as a cofactor.

The catalysed reaction is RNA(n) + a ribonucleoside 5'-triphosphate = RNA(n+1) + diphosphate. Its function is as follows. DNA-dependent RNA polymerase catalyzes the transcription of DNA into RNA using the four ribonucleoside triphosphates as substrates. The polypeptide is DNA-directed RNA polymerase subunit beta' (Pseudomonas fluorescens (strain Pf0-1)).